The following is a 194-amino-acid chain: Chitin synthase 2 (194 aa).

It belongs to the chitin synthase family. Class III subfamily.

The protein resides in the cell membrane. The enzyme catalyses [(1-&gt;4)-N-acetyl-beta-D-glucosaminyl](n) + UDP-N-acetyl-alpha-D-glucosamine = [(1-&gt;4)-N-acetyl-beta-D-glucosaminyl](n+1) + UDP + H(+). Its function is as follows. Polymerizes chitin, a structural polymer of the cell wall and septum, by transferring the sugar moiety of UDP-GlcNAc to the non-reducing end of the growing chitin polymer. The protein is Chitin synthase 2 (CHS2) of Ajellomyces capsulatus (Darling's disease fungus).